Consider the following 168-residue polypeptide: Phosphopantetheine adenylyltransferase (168 aa).

T10 is a binding site for substrate. Residues 10-11 (TF) and H18 each bind ATP. Substrate is bound by residues K42, L74, and R88. ATP-binding positions include 89 to 91 (GLR), E99, and 124 to 130 (NSFISST).

It belongs to the bacterial CoaD family. In terms of assembly, homohexamer. Mg(2+) serves as cofactor.

It localises to the cytoplasm. The catalysed reaction is (R)-4'-phosphopantetheine + ATP + H(+) = 3'-dephospho-CoA + diphosphate. It participates in cofactor biosynthesis; coenzyme A biosynthesis; CoA from (R)-pantothenate: step 4/5. Reversibly transfers an adenylyl group from ATP to 4'-phosphopantetheine, yielding dephospho-CoA (dPCoA) and pyrophosphate. The sequence is that of Phosphopantetheine adenylyltransferase from Shewanella frigidimarina (strain NCIMB 400).